The following is an 804-amino-acid chain: Leucine--tRNA ligase (804 aa).

Positions 40 to 51 (PYPSGAGLHVGH) match the 'HIGH' region motif. Positions 576-580 (KMSKS) match the 'KMSKS' region motif. An ATP-binding site is contributed by K579.

The protein belongs to the class-I aminoacyl-tRNA synthetase family.

It is found in the cytoplasm. The enzyme catalyses tRNA(Leu) + L-leucine + ATP = L-leucyl-tRNA(Leu) + AMP + diphosphate. The polypeptide is Leucine--tRNA ligase (Staphylococcus aureus (strain MRSA252)).